Reading from the N-terminus, the 242-residue chain is MANNGENGRHQEVGHKSLLQSDALYQYILDTSVYPREPEPMKELREITAKHPWNIMTTSADEGQFLSMLIKLINAKNTMEIGVFTGYSSLATAMALPDDGKILAMDINRENYEIGLPVIEKAGLAHKIEFKEGPALPVLDQMIEDGKYHGSYDFIFVDADKDNYLNYHKRLIDLVKVGGLIGYDNTLWNGSVVAPPDAPLRKYVRYYRDFVLELNKALAADPRIEICQLPVGDGITLCRRIS.

Lys-16 provides a ligand contact to substrate. S-adenosyl-L-methionine-binding positions include Thr-58, Glu-80, 82–83, Ser-88, Asp-106, and Ala-135; that span reads GV. Position 158 (Asp-158) interacts with substrate. Asp-158 is an a divalent metal cation binding site. Asp-160 contributes to the S-adenosyl-L-methionine binding site. The a divalent metal cation site is built by Asp-184 and Asn-185. Residue Asn-189 participates in substrate binding.

Belongs to the class I-like SAM-binding methyltransferase superfamily. Cation-dependent O-methyltransferase family. CCoAMT subfamily. A divalent metal cation serves as cofactor. In terms of tissue distribution, mostly expressed in petal limbs and tubes, and, at low levels, in stems, roots and leaves.

The protein localises to the cytoplasm. It localises to the cytosol. The catalysed reaction is (E)-caffeoyl-CoA + S-adenosyl-L-methionine = (E)-feruloyl-CoA + S-adenosyl-L-homocysteine + H(+). It carries out the reaction (E)-5-hydroxyferuloyl-CoA + S-adenosyl-L-methionine = (E)-sinapoyl-CoA + S-adenosyl-L-homocysteine + H(+). It functions in the pathway aromatic compound metabolism; phenylpropanoid biosynthesis. Functionally, involved in the production of floral volatile phenylpropanoids in flowers of fragrant cultivars (e.g. cv. Mitchell and cv. V26) from cinnamic acid, a common precursor with the anthocyanin biosynthesis pathway involved in flower pigmentation. Methylates caffeoyl-CoA to feruloyl-CoA, also able to methylate 5-hydroxyferuloyl-CoA. In Petunia hybrida (Petunia), this protein is Caffeoyl-CoA O-methyltransferase 2.